A 305-amino-acid chain; its full sequence is Oxidoreductase swnR (305 aa).

It belongs to the NmrA-type oxidoreductase family. Isoflavone reductase subfamily.

The catalysed reaction is L-pipecolate + O2 = L-1-piperideine-6-carboxylate + H2O2 + H(+). The protein operates within mycotoxin biosynthesis. Its function is as follows. Oxidoreductase; part of the gene cluster that mediates the biosynthesis of swainsonine (SW), a cytotoxic fungal alkaloid and a potential cancer therapy drug. Swainsonine production occurs via a multibranched pathway and is dispensable for fungal colonization of plants and infection of insect hosts. The first step of swainsonine biosynthesis is the production of the precursor pipecolic acid (PA) via conversion of L-lysine (Lys) to 1-piperideine-6-carboxylate (P6C) by the aminotransferase swnA, the latter being further reduced to PA by the reductase swnR. The PKS-NRPS hybrid synthetase swnK uptakes and condensates PA and malonyl-CoA with and without skipping of the ketoreductase (KR) domain in order to produce 3 intermediates, 1-oxoindolizidine, (1S)-1-hydroxyindolizin, and (1R)-1-hydroxyindolizine; with the transisomer (1S)-1-hydroxyindolizin being predominant. The terminal thioester reductase (TE) domain of swnK is involved in reduction of the thioester bond to release the intermediate aldehydes. The oxidoreductase swnN could contribute to the reduction of 1-oxoindolizidine to (1S)-1-hydroxyindolizin and (1R)-1-hydroxyindolizine, contributing to the major route of SW production. The dioxygenase swnH2 would be responsible for the oxidization of (1R)-1-hydroxyindolizine into (1R,2S)-1,2-dihydroxyindolizine and of (1S)-1-hydroxyindolizin to yield both (1R,2S)-1,2-dihydroxyindolizine and (1S,2S)-1,2-dihydroxyindolizine. The dioxygenase swnH1 then performs the conversion of the 1,2-dihydroxyindolizine epimers to SW. The chain is Oxidoreductase swnR from Arthroderma benhamiae (strain ATCC MYA-4681 / CBS 112371) (Trichophyton mentagrophytes).